Here is a 75-residue protein sequence, read N- to C-terminus: Cruzioseptin-7 (75 aa).

The first 22 residues, 1-22 (MAKLKKSLFLVLFLGLVSLSIC), serve as a signal peptide directing secretion. The propeptide occupies 23–43 (EEEKREEENEEVQEDDDQSEE). The tract at residues 25-44 (EKREEENEEVQEDDDQSEEK) is disordered. Residues 30–41 (ENEEVQEDDDQS) show a composition bias toward acidic residues.

Expressed by the skin glands.

Its subcellular location is the secreted. Functionally, has antimicrobial activity. The chain is Cruzioseptin-7 from Cruziohyla calcarifer (Splendid leaf frog).